Reading from the N-terminus, the 172-residue chain is Inorganic pyrophosphatase (172 aa).

Substrate contacts are provided by Lys-29, Arg-43, and Tyr-55. Mg(2+)-binding residues include Asp-65, Asp-70, and Asp-102. Tyr-141 is a substrate binding site.

It belongs to the PPase family. Homohexamer. Mg(2+) is required as a cofactor.

The protein resides in the cytoplasm. It catalyses the reaction diphosphate + H2O = 2 phosphate + H(+). Catalyzes the hydrolysis of inorganic pyrophosphate (PPi) forming two phosphate ions. This Rickettsia prowazekii (strain Madrid E) protein is Inorganic pyrophosphatase.